The chain runs to 397 residues: uncharacterized protein (397 aa).

Transmembrane regions (helical) follow at residues 1 to 21, 39 to 59, 76 to 96, 103 to 123, 124 to 144, 194 to 214, 219 to 239, 255 to 275, and 301 to 321; these read MGAS…LMLV, VIQS…VVVF, EALS…FGVP, VLLF…FVGA, ALIE…LVMA, MMTP…LFAF, ALFG…FSLL, LVYL…KLML, and QSLT…FWSA.

The protein belongs to the TerC family.

Its subcellular location is the cell membrane. This is an uncharacterized protein from Mycobacterium tuberculosis (strain CDC 1551 / Oshkosh).